The chain runs to 444 residues: Phosphoglucosamine mutase (444 aa).

Ser102 serves as the catalytic Phosphoserine intermediate. Mg(2+) contacts are provided by Ser102, Asp239, Asp241, and Asp243. A Phosphoserine modification is found at Ser102.

The protein belongs to the phosphohexose mutase family. Mg(2+) serves as cofactor. Post-translationally, activated by phosphorylation.

It catalyses the reaction alpha-D-glucosamine 1-phosphate = D-glucosamine 6-phosphate. In terms of biological role, catalyzes the conversion of glucosamine-6-phosphate to glucosamine-1-phosphate. In Saccharopolyspora erythraea (strain ATCC 11635 / DSM 40517 / JCM 4748 / NBRC 13426 / NCIMB 8594 / NRRL 2338), this protein is Phosphoglucosamine mutase.